Here is a 525-residue protein sequence, read N- to C-terminus: Ankyrin repeat and SOCS box protein 3 (525 aa).

11 ANK repeats span residues 9–38, 42–71, 78–107, 111–140, 145–174, 178–207, 211–240, 246–275, 279–308, 315–346, and 348–373; these read DTCS…SIDV, RGWM…SENY, EGFC…DPNA, EETT…NVNG, CGWN…NKEC, FGIT…DVNC, DKAT…DPDL, NWQL…RVCD, NKVS…SPDA, GFSS…QLNE, and HLAY…PSTP. Residues 441–505 form the SOCS box domain; it reads MLSARASNSS…HDYLLYAEVL (65 aa).

The protein belongs to the ankyrin SOCS box (ASB) family. As to quaternary structure, interacts with ELOB and TNFRSF1B.

It functions in the pathway protein modification; protein ubiquitination. Probable substrate-recognition component of a SCF-like ECS (Elongin-Cullin-SOCS-box protein) E3 ubiquitin-protein ligase complex which mediates the ubiquitination and subsequent proteasomal degradation of target proteins. Recognizes TNFRSF1B. This chain is Ankyrin repeat and SOCS box protein 3 (ASB3), found in Bos taurus (Bovine).